Consider the following 641-residue polypeptide: Peroxisomal targeting signal 1 receptor (641 aa).

Cys-12 is covalently cross-linked (Glycyl cysteine thioester (Cys-Gly) (interchain with G-Cter in ubiquitin)). Residues 12 to 34 (CSEPNALGNFVQHFTNERSYHDK) are amphipathic helix 1 (AH1). Positions 74–92 (HLMMDRHLNLRDGPREHKE) are amphipathic helix 2 (AH2). The segment at 261–288 (VEAAWDETARRTISDITRPITQINDPKL) is amphipathic helix 4 (AH4). A WxxxF/Y motif motif is present at residues 331–335 (WTEDY). TPR repeat units lie at residues 359-392 (DSDT…NPEN), 393-426 (AMAW…DPTN), 427-460 (SKAR…TPEY), 503-536 (PEVQ…SPTD), 538-570 (QLWN…KPSY), and 571-604 (VRAR…HPAP).

Belongs to the peroxisomal targeting signal receptor family. As to quaternary structure, interacts (via WxxxF/Y and LVxEF motifs) with PEX14; promoting translocation through the PEX13-PEX14 docking complex. Interacts with PEX7, promoting peroxisomal import of proteins containing a C-terminal PTS2-type peroxisomal targeting signal. Monoubiquitinated at Cys-12 by PEX2 during PEX5 passage through the retrotranslocation channel. Cys-12 monoubiquitination acts as a recognition signal for the PEX1-PEX6 complex and is required for PEX5 extraction and export from peroxisomes. When PEX5 recycling is compromised, polyubiquitinated by PEX10 during its passage through the retrotranslocation channel, leading to its degradation.

It localises to the cytoplasm. Its subcellular location is the cytosol. The protein localises to the peroxisome matrix. Its function is as follows. Receptor that mediates peroxisomal import of proteins containing a C-terminal PTS1-type tripeptide peroxisomal targeting signal (SKL-type). Binds to cargo proteins containing a PTS1 peroxisomal targeting signal in the cytosol, and translocates them into the peroxisome matrix by passing through the PEX13-PEX14 docking complex along with cargo proteins. PEX5 receptor is then retrotranslocated into the cytosol, leading to release of bound cargo in the peroxisome matrix, and reset for a subsequent peroxisome import cycle. In terms of biological role, in addition to promoting peroxisomal translocation of proteins containing a PTS1 peroxisomal targeting signal, mediates peroxisomal import of proteins containing a C-terminal PTS2-type peroxisomal targeting signal via its interaction with PEX7. Interaction with PEX7 only takes place when PEX7 is associated with cargo proteins containing a PTS2 peroxisomal targeting signal. PEX7 along with PTS2-containing cargo proteins are then translocated through the PEX13-PEX14 docking complex together with PEX5. This chain is Peroxisomal targeting signal 1 receptor (pex5), found in Dictyostelium discoideum (Social amoeba).